Here is a 362-residue protein sequence, read N- to C-terminus: 3-dehydroquinate synthase (362 aa).

NAD(+) contacts are provided by residues 71–76 (DGEQYK), 105–109 (GVVGD), 129–130 (TT), Lys142, Lys151, and 169–172 (CLKT). Zn(2+) is bound by residues Glu184, His247, and His264.

The protein belongs to the sugar phosphate cyclases superfamily. Dehydroquinate synthase family. Requires Co(2+) as cofactor. The cofactor is Zn(2+). NAD(+) is required as a cofactor.

The protein resides in the cytoplasm. The enzyme catalyses 7-phospho-2-dehydro-3-deoxy-D-arabino-heptonate = 3-dehydroquinate + phosphate. The protein operates within metabolic intermediate biosynthesis; chorismate biosynthesis; chorismate from D-erythrose 4-phosphate and phosphoenolpyruvate: step 2/7. Functionally, catalyzes the conversion of 3-deoxy-D-arabino-heptulosonate 7-phosphate (DAHP) to dehydroquinate (DHQ). The polypeptide is 3-dehydroquinate synthase (Escherichia coli O81 (strain ED1a)).